The primary structure comprises 496 residues: Glutamate--tRNA ligase (496 aa).

The 'HIGH' region signature appears at 12 to 22; that stretch reads PSPTGTPHVGL. A 'KMSKS' region motif is present at residues 256 to 260; the sequence is KLSKR. Lys259 is a binding site for ATP.

The protein belongs to the class-I aminoacyl-tRNA synthetase family. Glutamate--tRNA ligase type 1 subfamily. As to quaternary structure, monomer.

It localises to the cytoplasm. The enzyme catalyses tRNA(Glu) + L-glutamate + ATP = L-glutamyl-tRNA(Glu) + AMP + diphosphate. Its function is as follows. Catalyzes the attachment of glutamate to tRNA(Glu) in a two-step reaction: glutamate is first activated by ATP to form Glu-AMP and then transferred to the acceptor end of tRNA(Glu). This chain is Glutamate--tRNA ligase, found in Mycobacteroides abscessus (strain ATCC 19977 / DSM 44196 / CCUG 20993 / CIP 104536 / JCM 13569 / NCTC 13031 / TMC 1543 / L948) (Mycobacterium abscessus).